Reading from the N-terminus, the 957-residue chain is Thioredoxin domain-containing protein 11 (957 aa).

Gly residues predominate over residues 1 to 13 (MSECGGRGGGGGS). Residues 1–47 (MSECGGRGGGGGSSSSSDDAEDEGGGGGPAGSGSLSPAPAASSEGRL) form a disordered region. Residues 32 to 44 (SGSLSPAPAASSE) are compositionally biased toward low complexity. The chain crosses the membrane as a helical span at residues 64–84 (LLCGAVALGCALLLALKFTCS). The Thioredoxin 1 domain occupies 91–213 (IPAKPPVSFF…IEKFVRRVMK (123 aa)). 2 disulfides stabilise this stretch: Cys-441–Cys-444 and Cys-691–Cys-694. The 151-residue stretch at 621 to 771 (LDPKQALMKF…LLRFILHHSD (151 aa)) folds into the Thioredoxin 2 domain. The stretch at 785–889 (AECLQNEAVL…ADASETLLTE (105 aa)) forms a coiled coil. Positions 904-925 (LEGRDGADDRVPPSKARSEHPE) are enriched in basic and acidic residues. The segment at 904-957 (LEGRDGADDRVPPSKARSEHPEPPGAPRLPASTPLPANISSTLASEGSPENRTD) is disordered. The segment covering 941-951 (NISSTLASEGS) has biased composition (polar residues).

It belongs to the protein disulfide isomerase family. As to quaternary structure, interacts with the cytoplasmic part of DUOX1 and DUOX2. Interacts with TPO and CYBA.

It localises to the endoplasmic reticulum membrane. May act as a redox regulator involved in DUOX proteins folding. The interaction with DUOX1 and DUOX2 suggest that it belongs to a multiprotein complex constituting the thyroid H(2)O(2) generating system. It is however not sufficient to assist DUOX1 and DUOX2 in H(2)O(2) generation. The protein is Thioredoxin domain-containing protein 11 (TXNDC11) of Bos taurus (Bovine).